We begin with the raw amino-acid sequence, 795 residues long: RAS guanyl-releasing protein 1 (795 aa).

Residues 1–12 are compositionally biased toward basic and acidic residues; sequence MGTLGKAREAPR. The interval 1–37 is disordered; sequence MGTLGKAREAPRKPCHGSRAGPKARLEAKSTNSPLPA. The region spanning 53–176 is the N-terminal Ras-GEF domain; it reads LGHLAKGASL…HLIDTTQINS (124 aa). Positions 57–110 are ras exchanger motif region; required for transforming activity; that stretch reads AKGASLDDLIDSCIQSFDADGNLCRNNQLLQVMLTMHRIIISSAELLQKVMNLY. A Phosphothreonine; by PKC modification is found at T184. The Ras-GEF domain maps to 205–436; it reads EPEELSEHLT…YELSYAREPR (232 aa). 2 consecutive EF-hand domains span residues 470–505 and 506–532; these read HVQR…FPFS and FCVM…ASSI. Positions 483, 485, 487, 489, and 494 each coordinate Ca(2+). Residues 541-591 form a Phorbol-ester/DAG-type zinc finger; the sequence is PHNFQETTYLKPTFCDNCAGFLWGVIKQGYRCKDCGMNCHKQCKDLVVFEC. Position 597 is a phosphoserine (S597). A suppress the PT region-mediated translocation to plasma membrane region spans residues 686 to 694; that stretch reads TPGHFVLSS. The segment at 717–795 is PT region; mediates the BCR-dependent translocation to plasma membrane; it reads LVRKRAFVKW…LAQMDHGDSA (79 aa). Positions 738 to 779 form a coiled coil; it reads ELHLRLRTYQELEQEINTLKADNDALKIQLKYAQKKIESLQL.

Belongs to the RASGRP family. Homodimer. Forms a signaling complex with DGKZ and HRAS. Interacts with F-actin. Interacts with SKAP1. In terms of tissue distribution, detected in spleen and thymus. Expressed by mature thymocytes and to a lower extent by bone marrow-derived mast cells (at protein level). Detected in B-cells and keratinocytes (at protein level).

It is found in the cytoplasm. It localises to the cytosol. The protein resides in the cell membrane. Its subcellular location is the golgi apparatus membrane. The protein localises to the endoplasmic reticulum membrane. Its activity is regulated as follows. Autoinhibited. Activated by diacylglycerol and calcium binding, which induces a conformational change releasing the autoinhibitory state. Regulated by DGKA. Regulated by DGKZ. Regulated by PLC gamma and F-actin polymerization. In terms of biological role, functions as a calcium- and diacylglycerol (DAG)-regulated nucleotide exchange factor specifically activating Ras through the exchange of bound GDP for GTP. Activates the Erk/MAP kinase cascade. Regulates T-cell/B-cell development, homeostasis and differentiation by coupling T-lymphocyte/B-lymphocyte antigen receptors to Ras. Regulates NK cell cytotoxicity and ITAM-dependent cytokine production by activation of Ras-mediated ERK and JNK pathways. Functions in mast cell degranulation and cytokine secretion, regulating FcERI-evoked allergic responses. May also function in differentiation of other cell types. Proto-oncogene, which promotes T-cell lymphomagenesis when its expression is deregulated. This Mus musculus (Mouse) protein is RAS guanyl-releasing protein 1 (Rasgrp1).